Reading from the N-terminus, the 87-residue chain is Putative regulatory protein BCQ_3657 (87 aa).

It belongs to the RemA family.

This is Putative regulatory protein BCQ_3657 from Bacillus cereus (strain Q1).